The sequence spans 117 residues: Anti-sigma F factor antagonist (117 aa).

Residues 3 to 113 (LGIDMNVKES…QSEQQALLTL (111 aa)) form the STAS domain. A Phosphoserine modification is found at Ser-58.

The protein belongs to the anti-sigma-factor antagonist family. In terms of processing, phosphorylated by SpoIIAB on a serine residue.

Its function is as follows. In the phosphorylated form it could act as an anti-anti-sigma factor that counteracts SpoIIAB and thus releases sigma f from inhibition. In Bacillus subtilis (strain 168), this protein is Anti-sigma F factor antagonist (spoIIAA).